The sequence spans 136 residues: Crossover junction endodeoxyribonuclease Hjc (136 aa).

Glu-9 contacts Mg(2+). Ser-29 is a catalytic residue. Mg(2+) contacts are provided by Asp-38 and Glu-51.

This sequence belongs to the Holliday junction resolvase Hjc family. Homodimer. The cofactor is Mg(2+).

The catalysed reaction is Endonucleolytic cleavage at a junction such as a reciprocal single-stranded crossover between two homologous DNA duplexes (Holliday junction).. A structure-specific endonuclease that resolves Holliday junction (HJ) intermediates during genetic recombination. Cleaves 4-way DNA junctions introducing paired nicks in opposing strands, leaving a 5'-terminal phosphate and a 3'-terminal hydroxyl group that are subsequently ligated to produce recombinant products. The polypeptide is Crossover junction endodeoxyribonuclease Hjc (Archaeoglobus fulgidus (strain ATCC 49558 / DSM 4304 / JCM 9628 / NBRC 100126 / VC-16)).